The following is a 368-amino-acid chain: F-box only protein 28 (368 aa).

Basic and acidic residues predominate over residues 1–11; sequence MAAASEERMAE. Residues 1–56 are disordered; the sequence is MAAASEERMAEEGGGGHGDGGSCSAAGSAQRQPPAPPSQAPPPGSQAPAAPALAPD. The span at 12–21 shows a compositional bias: gly residues; that stretch reads EGGGGHGDGG. Residues 22–32 show a composition bias toward low complexity; it reads SCSAAGSAQRQ. Over residues 33–45 the composition is skewed to pro residues; the sequence is PPAPPSQAPPPGS. The span at 46–55 shows a compositional bias: low complexity; that stretch reads QAPAAPALAP. In terms of domain architecture, F-box spans 61 to 109; sequence NNTLVALPIVAIENILSFMSYDEISQLRLVCKRMDLVCQRMLNQGFLKV. 2 positions are modified to phosphoserine: Ser235 and Ser242. Residue Thr270 is modified to Phosphothreonine. Positions 328-368 are disordered; it reads MESAVGTSSGSGQSEESPRKRRKATEAIDSLRKSKRLRNRK. At Ser344 the chain carries Phosphoserine.

As to quaternary structure, part of a SCF (SKP1-cullin-F-box) protein ligase complex.

Its subcellular location is the chromosome. It localises to the centromere. The protein localises to the kinetochore. Probably recognizes and binds to some phosphorylated proteins and promotes their ubiquitination and degradation. The sequence is that of F-box only protein 28 (Fbxo28) from Mus musculus (Mouse).